A 488-amino-acid polypeptide reads, in one-letter code: 3-octaprenyl-4-hydroxybenzoate carboxy-lyase (488 aa).

Asn172 is a binding site for Mn(2+). Prenylated FMN is bound by residues 175–177, 189–191, and 194–195; these read IYR, RWL, and RG. Mn(2+) is bound at residue Glu238. Residue Asp287 is the Proton donor of the active site.

This sequence belongs to the UbiD family. In terms of assembly, homohexamer. Requires prenylated FMN as cofactor. It depends on Mn(2+) as a cofactor.

It is found in the cell membrane. The catalysed reaction is a 4-hydroxy-3-(all-trans-polyprenyl)benzoate + H(+) = a 2-(all-trans-polyprenyl)phenol + CO2. The protein operates within cofactor biosynthesis; ubiquinone biosynthesis. In terms of biological role, catalyzes the decarboxylation of 3-octaprenyl-4-hydroxy benzoate to 2-octaprenylphenol, an intermediate step in ubiquinone biosynthesis. This is 3-octaprenyl-4-hydroxybenzoate carboxy-lyase from Pseudoalteromonas translucida (strain TAC 125).